A 280-amino-acid polypeptide reads, in one-letter code: 4-hydroxy-3-methylbut-2-enyl diphosphate reductase (280 aa).

Cys-12 is a binding site for [4Fe-4S] cluster. (2E)-4-hydroxy-3-methylbut-2-enyl diphosphate-binding residues include His-40 and His-72. Dimethylallyl diphosphate contacts are provided by His-40 and His-72. Residues His-40 and His-72 each coordinate isopentenyl diphosphate. Position 94 (Cys-94) interacts with [4Fe-4S] cluster. His-122 provides a ligand contact to (2E)-4-hydroxy-3-methylbut-2-enyl diphosphate. His-122 provides a ligand contact to dimethylallyl diphosphate. An isopentenyl diphosphate-binding site is contributed by His-122. Glu-124 serves as the catalytic Proton donor. Thr-160 is a binding site for (2E)-4-hydroxy-3-methylbut-2-enyl diphosphate. Cys-188 contacts [4Fe-4S] cluster. 3 residues coordinate (2E)-4-hydroxy-3-methylbut-2-enyl diphosphate: Ser-216, Asn-218, and Ser-260. The dimethylallyl diphosphate site is built by Ser-216, Asn-218, and Ser-260. Positions 216, 218, and 260 each coordinate isopentenyl diphosphate.

Belongs to the IspH family. [4Fe-4S] cluster is required as a cofactor.

It catalyses the reaction isopentenyl diphosphate + 2 oxidized [2Fe-2S]-[ferredoxin] + H2O = (2E)-4-hydroxy-3-methylbut-2-enyl diphosphate + 2 reduced [2Fe-2S]-[ferredoxin] + 2 H(+). It carries out the reaction dimethylallyl diphosphate + 2 oxidized [2Fe-2S]-[ferredoxin] + H2O = (2E)-4-hydroxy-3-methylbut-2-enyl diphosphate + 2 reduced [2Fe-2S]-[ferredoxin] + 2 H(+). It functions in the pathway isoprenoid biosynthesis; dimethylallyl diphosphate biosynthesis; dimethylallyl diphosphate from (2E)-4-hydroxy-3-methylbutenyl diphosphate: step 1/1. The protein operates within isoprenoid biosynthesis; isopentenyl diphosphate biosynthesis via DXP pathway; isopentenyl diphosphate from 1-deoxy-D-xylulose 5-phosphate: step 6/6. Catalyzes the conversion of 1-hydroxy-2-methyl-2-(E)-butenyl 4-diphosphate (HMBPP) into a mixture of isopentenyl diphosphate (IPP) and dimethylallyl diphosphate (DMAPP). Acts in the terminal step of the DOXP/MEP pathway for isoprenoid precursor biosynthesis. The polypeptide is 4-hydroxy-3-methylbut-2-enyl diphosphate reductase (Pelobacter propionicus (strain DSM 2379 / NBRC 103807 / OttBd1)).